A 214-amino-acid polypeptide reads, in one-letter code: Phosphatidylserine decarboxylase proenzyme (214 aa).

Serine 182 acts as the Schiff-base intermediate with substrate; via pyruvic acid in catalysis. Residue serine 182 is modified to Pyruvic acid (Ser); by autocatalysis.

Belongs to the phosphatidylserine decarboxylase family. PSD-A subfamily. Heterodimer of a large membrane-associated beta subunit and a small pyruvoyl-containing alpha subunit. Pyruvate serves as cofactor. Is synthesized initially as an inactive proenzyme. Formation of the active enzyme involves a self-maturation process in which the active site pyruvoyl group is generated from an internal serine residue via an autocatalytic post-translational modification. Two non-identical subunits are generated from the proenzyme in this reaction, and the pyruvate is formed at the N-terminus of the alpha chain, which is derived from the carboxyl end of the proenzyme. The post-translation cleavage follows an unusual pathway, termed non-hydrolytic serinolysis, in which the side chain hydroxyl group of the serine supplies its oxygen atom to form the C-terminus of the beta chain, while the remainder of the serine residue undergoes an oxidative deamination to produce ammonia and the pyruvoyl prosthetic group on the alpha chain.

The protein localises to the cell membrane. The enzyme catalyses a 1,2-diacyl-sn-glycero-3-phospho-L-serine + H(+) = a 1,2-diacyl-sn-glycero-3-phosphoethanolamine + CO2. The protein operates within phospholipid metabolism; phosphatidylethanolamine biosynthesis; phosphatidylethanolamine from CDP-diacylglycerol: step 2/2. Its function is as follows. Catalyzes the formation of phosphatidylethanolamine (PtdEtn) from phosphatidylserine (PtdSer). The protein is Phosphatidylserine decarboxylase proenzyme of Burkholderia vietnamiensis (strain G4 / LMG 22486) (Burkholderia cepacia (strain R1808)).